A 427-amino-acid polypeptide reads, in one-letter code: Inorganic pyrophosphatase 1 (427 aa).

Positions 36 to 52 (SSSSNTATTSTSSSNTS) are enriched in low complexity. 2 disordered regions span residues 36-63 (SSSS…TSRP) and 77-118 (SMDS…RSLH). 2 stretches are compositionally biased toward polar residues: residues 53 to 63 (QKWATSRTSRP) and 77 to 114 (SMDS…ANSE). The Mg(2+) site is built by Asp259, Asp264, and Asp296.

Belongs to the PPase family. Mg(2+) is required as a cofactor. Expressed in coelomocytes, the intestine and in the nervous system including the nerve cords and sensory neurons.

The protein resides in the cytoplasm. The enzyme catalyses diphosphate + H2O = 2 phosphate + H(+). Functionally, catalyzes the hydrolysis of inorganic pyrophosphate (PPi) forming two phosphate ions. Plays a role in intestinal development and subsequent normal secretory, digestive and absorption functions. Required for larval development. This Caenorhabditis elegans protein is Inorganic pyrophosphatase 1.